A 464-amino-acid chain; its full sequence is AAC-rich mRNA clone AAC11 protein (464 aa).

The span at 1–15 (MSTPTLPNLSQLHGI) shows a compositional bias: polar residues. Disordered stretches follow at residues 1–112 (MSTP…HGTN) and 125–464 (SLPQ…SFFH). Composition is skewed to low complexity over residues 16–65 (QNQS…QQPQ), 78–88 (NPNGLGLMGHN), and 130–160 (INNN…NNSN). The span at 161–174 (LGINSSPTQSSANS) shows a compositional bias: polar residues. 3 DNA-binding regions (a.T hook) span residues 177–189 (KRSR…NPPS), 198–210 (KRKR…MDEE), and 224–236 (NKKR…PKDE). The span at 240-253 (DYNNTSFSDSNTDG) shows a compositional bias: polar residues. A DNA-binding region (a.T hook 4) is located at residues 255–267 (PKKRGRPPKAKGD). Residues 276 to 428 (NTLGNGILNS…NNAGNLGNLG (153 aa)) show a composition bias toward low complexity. Positions 433 to 464 (LHSSDPNNPNAQKSFPDSTNTMDFQPNFSFFH) are enriched in polar residues.

The chain is AAC-rich mRNA clone AAC11 protein (AAC11) from Dictyostelium discoideum (Social amoeba).